The sequence spans 226 residues: MGIRAIVVDTAGTTTDLTFIQDVLFPYSVKALPDFLAQNQHNVLVENCICDTRDIALEPDADLNRVTEILQQWVREDRKATPLKTLQGLIWKQGYAHDEFKGHIFPDFIEAVKRFSAQNLRIYSFSSGSVDAQKLLFSHSDGGDLTEMFNGHFDTRTGNKLDKQAYCNILNTISLSPKQVLFVSDVIEELKAADAAGMMTCQMVRDSKQRTGDFRTINSFDKLVIE.

The protein belongs to the HAD-like hydrolase superfamily. MasA/MtnC family. As to quaternary structure, monomer. Requires Mg(2+) as cofactor.

The enzyme catalyses 5-methylsulfanyl-2,3-dioxopentyl phosphate + H2O = 1,2-dihydroxy-5-(methylsulfanyl)pent-1-en-3-one + phosphate. It functions in the pathway amino-acid biosynthesis; L-methionine biosynthesis via salvage pathway; L-methionine from S-methyl-5-thio-alpha-D-ribose 1-phosphate: step 3/6. The protein operates within amino-acid biosynthesis; L-methionine biosynthesis via salvage pathway; L-methionine from S-methyl-5-thio-alpha-D-ribose 1-phosphate: step 4/6. Functionally, bifunctional enzyme that catalyzes the enolization of 2,3-diketo-5-methylthiopentyl-1-phosphate (DK-MTP-1-P) into the intermediate 2-hydroxy-3-keto-5-methylthiopentenyl-1-phosphate (HK-MTPenyl-1-P), which is then dephosphorylated to form the acireductone 1,2-dihydroxy-3-keto-5-methylthiopentene (DHK-MTPene). This is Enolase-phosphatase E1 from Shewanella oneidensis (strain ATCC 700550 / JCM 31522 / CIP 106686 / LMG 19005 / NCIMB 14063 / MR-1).